A 484-amino-acid polypeptide reads, in one-letter code: Alkaline nuclease (484 aa).

The protein belongs to the herpesviridae alkaline nuclease family. In terms of assembly, interacts with major DNA-binding protein; this interaction increases the nuclease processivity of the alkaline exonuclease.

Its subcellular location is the host nucleus. The protein localises to the host cytoplasm. In terms of biological role, plays a role in processing non linear or branched viral DNA intermediates in order to promote the production of mature packaged unit-length linear progeny viral DNA molecules. Exhibits endonuclease and exonuclease activities and accepts both double-stranded and single-stranded DNA as substrate. Exonuclease digestion of DNA is in the 5'-&gt; 3' direction and the products are 5'-monophosphate nucleosides. Additionally, forms a recombinase with the major DNA-binding protein, which displays strand exchange activity. The chain is Alkaline nuclease from Elephas maximus (Indian elephant).